We begin with the raw amino-acid sequence, 452 residues long: PHO85 cyclin CLG1 (452 aa).

Belongs to the cyclin family. PCL1,2 subfamily. Forms a cyclin-CDK complex with PHO85.

Functionally, cyclin partner of the cyclin-dependent kinase (CDK) PHO85. Has a role in cell integrity and polarized cell growth together with the other PCL1/PCL2 cyclin family members. The protein is PHO85 cyclin CLG1 (CLG1) of Saccharomyces cerevisiae (strain ATCC 204508 / S288c) (Baker's yeast).